Here is a 271-residue protein sequence, read N- to C-terminus: MHFMTALRAAWRTRNSLLCVGLDPDPTRFPAHLHGQPDAIFRFCSEIVDATADLVCCFKPQIAYFAAQRAEDQLEALIAHIHARHPGTPVILDAKRGDIGSSAGQYAVEAFERFGADAITVNPYMGRDSVEPYLEYTDKGVILLCRTSNPGGSDLQFLDVGGGERLFERVARLVADEWNQSGNCSLVVGATFPNEIARVRELVGDLPLLVPGIGAQGGDIAATVEAGRSADRTGLMINSSRAILYAGADHDFAAAARRAALDTRDAINRHR.

The active-site Proton donor is the Lys-95.

This sequence belongs to the OMP decarboxylase family. Type 2 subfamily.

It catalyses the reaction orotidine 5'-phosphate + H(+) = UMP + CO2. It functions in the pathway pyrimidine metabolism; UMP biosynthesis via de novo pathway; UMP from orotate: step 2/2. This is Orotidine 5'-phosphate decarboxylase from Aromatoleum aromaticum (strain DSM 19018 / LMG 30748 / EbN1) (Azoarcus sp. (strain EbN1)).